The primary structure comprises 223 residues: Deoxyribose-phosphate aldolase (223 aa).

Asp-91 functions as the Proton donor/acceptor in the catalytic mechanism. Residue Lys-153 is the Schiff-base intermediate with acetaldehyde of the active site. The active-site Proton donor/acceptor is Lys-182.

It belongs to the DeoC/FbaB aldolase family. DeoC type 1 subfamily.

The protein resides in the cytoplasm. The catalysed reaction is 2-deoxy-D-ribose 5-phosphate = D-glyceraldehyde 3-phosphate + acetaldehyde. It functions in the pathway carbohydrate degradation; 2-deoxy-D-ribose 1-phosphate degradation; D-glyceraldehyde 3-phosphate and acetaldehyde from 2-deoxy-alpha-D-ribose 1-phosphate: step 2/2. Its function is as follows. Catalyzes a reversible aldol reaction between acetaldehyde and D-glyceraldehyde 3-phosphate to generate 2-deoxy-D-ribose 5-phosphate. In Streptococcus agalactiae serotype V (strain ATCC BAA-611 / 2603 V/R), this protein is Deoxyribose-phosphate aldolase.